A 268-amino-acid polypeptide reads, in one-letter code: Lectin ESA-2 (268 aa).

A run of 4 repeats spans residues Gly1 to Glu67, Ser68 to Gly135, Asp136 to Ala202, and Asn203 to Ser268. The interval Gly1 to Ser268 is 4 X approximate tandem repeats.

As to quaternary structure, monomer.

In terms of biological role, lectin specific for high mannose N-glycans, recognizes the branched moiety of these glycans. Does not recognize other types of N-glycans or monosaccharides. Agglutinates trypsin-treated sheep and rabbit erythrocytes and untreated sheep erythrocytes. Has mitogenic activity on mouse lymphocytes. Does not require metal ions for activity. The sequence is that of Lectin ESA-2 from Eucheuma serra (Marine red alga).